The sequence spans 246 residues: Orotidine 5'-phosphate decarboxylase (246 aa).

Residues Asp22, Lys44, 71-80, Thr130, Arg191, Gln201, Gly221, and Arg222 contribute to the substrate site; that span reads DLKYHDIPHT. The active-site Proton donor is Lys73.

It belongs to the OMP decarboxylase family. Type 1 subfamily. Homodimer.

It carries out the reaction orotidine 5'-phosphate + H(+) = UMP + CO2. It functions in the pathway pyrimidine metabolism; UMP biosynthesis via de novo pathway; UMP from orotate: step 2/2. In terms of biological role, catalyzes the decarboxylation of orotidine 5'-monophosphate (OMP) to uridine 5'-monophosphate (UMP). This chain is Orotidine 5'-phosphate decarboxylase, found in Neisseria meningitidis serogroup C (strain 053442).